Consider the following 1534-residue polypeptide: DNA-directed RNA polymerase subunit beta'' (1534 aa).

Zn(2+) is bound by residues cysteine 220, cysteine 296, cysteine 303, and cysteine 306. Composition is skewed to basic and acidic residues over residues 644–668 (RTQE…RTRE) and 678–688 (PENKYRTREGE). Disordered regions lie at residues 644–698 (RTQE…EDEY) and 719–800 (YRTL…KKEG). Acidic residues-rich tracts occupy residues 744–762 (GEYE…SSED) and 770–789 (TLEE…EYGS).

The protein belongs to the RNA polymerase beta' chain family. RpoC2 subfamily. In plastids the minimal PEP RNA polymerase catalytic core is composed of four subunits: alpha, beta, beta', and beta''. When a (nuclear-encoded) sigma factor is associated with the core the holoenzyme is formed, which can initiate transcription. Requires Zn(2+) as cofactor.

The protein resides in the plastid. It localises to the chloroplast. The enzyme catalyses RNA(n) + a ribonucleoside 5'-triphosphate = RNA(n+1) + diphosphate. Its function is as follows. DNA-dependent RNA polymerase catalyzes the transcription of DNA into RNA using the four ribonucleoside triphosphates as substrates. The polypeptide is DNA-directed RNA polymerase subunit beta'' (Saccharum hybrid (Sugarcane)).